The following is a 776-amino-acid chain: Kinesin-like protein KIN-8A (776 aa).

2 disordered regions span residues 1-31 (MPVSTRASAAGGQPWSSAAPAPASAPGRGGA) and 80-135 (VGEV…KSSH). Low complexity predominate over residues 7-26 (ASAAGGQPWSSAAPAPASAP). Pro residues predominate over residues 123-132 (PPPPPAPPPK). The Kinesin motor domain maps to 205–534 (RIMVFVRLRP…LHWADRAKEI (330 aa)). An ATP-binding site is contributed by 297-304 (GATGAGKT). Residues 554–592 (TDQAKLVLELQKENSELRQQLARQQQKLLTVQAQTLASN) are a coiled coil. A disordered region spans residues 590–611 (ASNASPQQSPAPSAQISTPCST). Positions 593-604 (ASPQQSPAPSAQ) are enriched in low complexity. A coiled-coil region spans residues 634-671 (AAENAQVRDLQRKVKAMEAEIEKMKKEHLLQLKQKDEF).

The protein belongs to the TRAFAC class myosin-kinesin ATPase superfamily. Kinesin family. KIN-8 subfamily.

This Oryza sativa subsp. japonica (Rice) protein is Kinesin-like protein KIN-8A.